The sequence spans 529 residues: CRISPR-associated endodeoxyribonuclease Cas12f1 (529 aa).

The segment at 1–95 (MAKNTITKTL…RGQFPDAVFW (95 aa)) is zinc finger domain (ZF). Residues C50, H53, C69, and C72 each coordinate Zn(2+). Positions 96-192 (QEISEIFRQL…PTTKSDNFPI (97 aa)) are recognition domain (REC). Residues 193–312 (PLVKQKGGQY…MLNLSIDVPK (120 aa)) form a wedge domain (WED) region. The interval 313 to 321 (IDKGVDPSI) is linker. The segment at 322–473 (IGGIDVGVKS…RKVAPNNTSK (152 aa)) is ruvC-I. Catalysis depends on residues D326 and E422. The tract at residues 474 to 508 (TCSKCGHLNNYFNFEYRKKNKFPHFKCEKCNFKEN) is target nucleic acid-binding (TNB). Residues C475 and C478 each coordinate Zn(2+). Residue R490 is part of the active site. C500 and C503 together coordinate Zn(2+). The ruvC-II stretch occupies residues 509 to 529 (ADYNAALNISNPKLKSTKEEP). The active site involves D510.

Belongs to the CRISPR-associated endonuclease Cas12f family. As to quaternary structure, an asymmetric homodimer. Guide RNA is probably required for dimerization. Mg(2+) serves as cofactor. Requires Zn(2+) as cofactor.

Its activity is regulated as follows. Target ssDNA cleavage is inhibited by EDTA. Activity is maximal with 5-50 mM NaCl, is less efficient at higher NaCl concentrations. Its function is as follows. CRISPR (clustered regularly interspaced short palindromic repeat), is an adaptive immune system that provides protection against mobile genetic elements (viruses, transposable elements and conjugative plasmids). CRISPR clusters contain sequences complementary to antecedent mobile elements and target invading nucleic acids. CRISPR clusters are transcribed and processed into CRISPR RNA (crRNA), which requires a trans-encoded small RNA (tracrRNA), but not this protein (in vitro). Upon expression in E.coli of this protein, a mini CRISPR array and the probable tracrRNA, the protein associates with both RNAs. The mini system is not active in E.coli against phiX174 phage, nor is it active in protection against transformation by foreign plasmids. In vitro the purified protein-tracrRNA-crRNA complex cleaves ssDNA complementary to the crRNA; target cleavage requires both tracrRNA and crRNA, but not a protospacer adjacent motif (PAM). The tracrRNA-crRNA can be replaced by a single guide RNA (sgRNA). 2-nucleotide mismatches in the middle of the crRNA:DNA heteroduplex decrease cleavage. Cleavage occurs just downstream of the heteroduplex. Activation of this protein results in non-specific ssDNA degradation in vitro. In vitro and in E.coli (coexpressed with sgRNA) has dsDNA endonuclease activity, recognizing the 5' PAM sequence TTTR; both sgRNA and a PAM are required for activity. Cleaves the target strand 24 and the nontarget strand 22 bases upstream of the PAM (respectively), resulting in 5' overhangs. The 2 monomers interact differently with the sgRNA and target DNA. Mutagenesis of a dimeric construct shows that one of the RuvC monomers probably cleaves both DNA strands. This chain is CRISPR-associated endodeoxyribonuclease Cas12f1, found in Uncultured archaeon.